A 128-amino-acid chain; its full sequence is Large ribosomal subunit protein bL19 (128 aa).

The protein belongs to the bacterial ribosomal protein bL19 family.

Its function is as follows. This protein is located at the 30S-50S ribosomal subunit interface and may play a role in the structure and function of the aminoacyl-tRNA binding site. The protein is Large ribosomal subunit protein bL19 of Caldicellulosiruptor bescii (strain ATCC BAA-1888 / DSM 6725 / KCTC 15123 / Z-1320) (Anaerocellum thermophilum).